The chain runs to 611 residues: ATP-dependent zinc metalloprotease FtsH (611 aa).

Position 1 (Met1) is a topological domain, cytoplasmic. The helical transmembrane segment at 2–22 (VKNLIFWLVITVVLMSIFQNF) threads the bilayer. Over 23 to 98 (NTNDVNNHKV…IGAIPEEPSL (76 aa)) the chain is Extracellular. The helical transmembrane segment at 99–119 (FISILISWFPMLLLIGVWIFF) threads the bilayer. Over 120 to 611 (MRQMQMGGGK…KGWIETDTNK (492 aa)) the chain is Cytoplasmic. 192–199 (GPPGTGKT) lines the ATP pocket. His414 contacts Zn(2+). Glu415 is an active-site residue. Zn(2+)-binding residues include His418 and Asp492.

This sequence in the central section; belongs to the AAA ATPase family. The protein in the C-terminal section; belongs to the peptidase M41 family. As to quaternary structure, homohexamer. Zn(2+) serves as cofactor.

It is found in the cell membrane. Its function is as follows. Acts as a processive, ATP-dependent zinc metallopeptidase for both cytoplasmic and membrane proteins. Plays a role in the quality control of integral membrane proteins. The sequence is that of ATP-dependent zinc metalloprotease FtsH from Buchnera aphidicola subsp. Acyrthosiphon pisum (strain APS) (Acyrthosiphon pisum symbiotic bacterium).